Reading from the N-terminus, the 292-residue chain is uncharacterized protein (292 aa).

Residues 175–197 (VLNFYFTALPYAIDGIISGIGVF) traverse the membrane as a helical segment.

Its subcellular location is the membrane. This is an uncharacterized protein from Methanocaldococcus jannaschii (strain ATCC 43067 / DSM 2661 / JAL-1 / JCM 10045 / NBRC 100440) (Methanococcus jannaschii).